The primary structure comprises 369 residues: Polycomb group protein FERTILIZATION-INDEPENDENT ENDOSPERM (369 aa).

7 WD repeats span residues 31-73 (EGKK…AISA), 81-123 (DKEE…IHKS), 126-166 (GHGD…CILI), 172-212 (GHRY…TYVE), 238-275 (IHTNYVDCNRWFGDFILSKSVDNEILLWEPQLKENSPG), 287-328 (VPMC…PVLI), and 335-368 (QSKSVIRQTAMSVDGSTILACCEDGTIWRWDVIT).

Belongs to the WD repeat ESC family. In terms of assembly, interacts directly with MEA. These two proteins are probably indirectly associated with FIS2. In plants, PcG complexes are probably composed of a member of the EZ family (CLF or MEA), FIE, and a member of the VEFS family (FIS2, VRN2 or EMF2). Component of the plant homeodomain / polycomb repressive complex 2 (PHD-PRC2) large complex during prolonged cold, composed of core PRC2 components (VRN2, EZA1, FIE and MSI1), and three related PHD finger proteins (VIL1, VIL2 and VIN3) that mediates histone H3 trimethylation on 'Lys-27' (H3K27me3). Binds to ALP1. As to expression, expressed in cauline leaves, root and stems. In the male reproductive organ, it is expressed in the developing anther; and is abundant in microspore mother cells, in microsporocytes and in the tapetum, but is absent from vascular bundles, the connective tissue and the filament. It is also absent from pollen grains at subsequent developmental stages. In the developing female reproductive organs, it is highly expressed in all cells of the young ovules primordium before archesporial differentiation. Then, it is highly expressed in the ovule sporophytic tissue and the megaspore mother cell before meiosis, but is absent from placenta or the developing carpel. Then, it decreases.

The protein resides in the nucleus. Its function is as follows. Polycomb group (PcG) protein. PcG proteins act by forming multiprotein complexes, which are required to maintain the transcriptionally repressive state of homeotic genes throughout development. PcG proteins are not required to initiate repression, but to maintain it during later stages of development. They probably act via the methylation of histones, rendering chromatin heritably changed in its expressibility. Required to prevent the proliferation of the central cell by repressing unknown target genes before fertilization. Probably also involved in floral repression mechanism established during early plant development. Regulates the anteroposterior organization of the endosperm. Interacts with the promoter and represses the transcription of genes such as PHE1, that are paternally active and maternally silenced. The chain is Polycomb group protein FERTILIZATION-INDEPENDENT ENDOSPERM (FIE) from Arabidopsis thaliana (Mouse-ear cress).